Consider the following 399-residue polypeptide: MFKKYKNQDLDMAFWWKKNPKTPSDYARLIIEQLNKFSSPSLTQDNKRKVQEECTKYLIGTKHFIVGDTDPHPTPEAIDELYTAMHRADVFYELLLHFVDLEFEARRECMLIFSICLGYSKDNKFVTVDYLVSQPKTISLMLRTAEVALQQKGCQDIFLTVGNMIIECIKYEQLCRIILKDPQLWKFFEFAKLGNFEISTESLQILSAAFTAHPKLVSKEFFSNEINIIRFIKCINKLMAHGSYVTKRQSTKLLASLIVIRSNNALMNIYINSPENLKLIMTLMTDKSKNLQLEAFNVFKVMVANPRKSKPVFDILVKNRDKLLTYFKTFGLDSQDSTFLDEREFIVQEIDSLPRIISSTTEVSNNNASSSNVASITSPSSVMNNQSSILTHSTSPDSR.

Residues 363-382 (VSNNNASSSNVASITSPSSV) show a composition bias toward low complexity. The disordered stretch occupies residues 363 to 399 (VSNNNASSSNVASITSPSSVMNNQSSILTHSTSPDSR). Residues 383 to 399 (MNNQSSILTHSTSPDSR) show a composition bias toward polar residues.

The protein belongs to the Mo25 family.

This Saccharomyces cerevisiae (strain ATCC 204508 / S288c) (Baker's yeast) protein is Protein HYM1 (HYM1).